We begin with the raw amino-acid sequence, 900 residues long: Translation initiation factor IF-2 (900 aa).

Composition is skewed to basic and acidic residues over residues 119-158, 165-191, and 198-229; these read AAKA…EKQE, ADEK…KADA, and EEAR…DHHV. Residues 119-306 form a disordered region; it reads AAKAEAEAKA…NARSVAPESM (188 aa). Over residues 257–272 the composition is skewed to low complexity; sequence SANAGNNANSNSNAGS. The region spanning 400-569 is the tr-type G domain; that stretch reads PRAPVVTIMG…LLESEVLELK (170 aa). The segment at 409 to 416 is G1; that stretch reads GHVDHGKT. 409–416 is a GTP binding site; that stretch reads GHVDHGKT. The tract at residues 434 to 438 is G2; the sequence is GITQH. The interval 455–458 is G3; sequence DTPG. GTP-binding positions include 455–459 and 509–512; these read DTPGH and NKID. Residues 509-512 are G4; that stretch reads NKID. The tract at residues 545–547 is G5; the sequence is SAK.

Belongs to the TRAFAC class translation factor GTPase superfamily. Classic translation factor GTPase family. IF-2 subfamily.

The protein localises to the cytoplasm. One of the essential components for the initiation of protein synthesis. Protects formylmethionyl-tRNA from spontaneous hydrolysis and promotes its binding to the 30S ribosomal subunits. Also involved in the hydrolysis of GTP during the formation of the 70S ribosomal complex. This Shewanella piezotolerans (strain WP3 / JCM 13877) protein is Translation initiation factor IF-2.